The following is a 446-amino-acid chain: Keratin, type I cytoskeletal 25 (446 aa).

The head stretch occupies residues 1-74; the sequence is MSLRLSSGSR…VNEGGLLSGN (74 aa). Residues 75 to 110 are coil 1A; the sequence is EKVTMQNLNDRLASYLDNVQALQEANADLEQKIKGW. In terms of domain architecture, IF rod spans 75-390; sequence EKVTMQNLND…LLIGGDEGAC (316 aa). Residues 111-132 form a linker 1 region; that stretch reads YEKFGPGSCRGLDHDYSRYFPI. The interval 133–224 is coil 1B; that stretch reads IDDLKNQIIT…KNHKEEMQAL (92 aa). The segment at 225–247 is linker 12; it reads QCAAGGNVNVEMNAAPGVDLTVL. Positions 248 to 386 are coil 2; that stretch reads LNNMRAEYEA…ETYCLLIGGD (139 aa). A tail region spans residues 387-446; it reads EGACKSSSYKSKDYGSGNAGNQIKDPVKAIVVKKVLEEVDQRSKILTTRLHSLEEKSQSN. Serine 438 bears the Phosphoserine mark.

This sequence belongs to the intermediate filament family. As to quaternary structure, heterodimer of a type I and a type II keratin. Heterodimer with type II keratin KRT5 leading to the formation of keratin intermediate filament (KIF) network. Interacts with KRT6A to form filaments.

It is found in the cytoplasm. In terms of biological role, essential for the proper assembly of type I and type II keratin protein complexes and formation of keratin intermediate filaments in the inner root sheath (irs). Plays a role in the cytoskeleton organization. The polypeptide is Keratin, type I cytoskeletal 25 (Mus musculus (Mouse)).